Reading from the N-terminus, the 30-residue chain is Photosystem I reaction center subunit XII (30 aa).

Residues 7–29 (VYIALMAALLASVLAIRLGATLY) traverse the membrane as a helical segment.

Belongs to the PsaM family.

Its subcellular location is the plastid. It localises to the chloroplast thylakoid membrane. The polypeptide is Photosystem I reaction center subunit XII (Thalassiosira pseudonana (Marine diatom)).